A 436-amino-acid polypeptide reads, in one-letter code: Mannan endo-1,4-beta-mannosidase F (436 aa).

Positions Met1 to Ala18 are cleaved as a signal peptide. A CBM1 domain is found at Gln19–Gln54. The tract at residues Ser60–Pro88 is disordered. Positions Ser79–Gly113 are ser-rich linker. The tract at residues Thr114–Ile436 is catalytic. Substrate is bound by residues Trp146 and Asn260. The active-site Proton donor is Glu261. Tyr336 provides a ligand contact to substrate. Glu370 functions as the Nucleophile in the catalytic mechanism. Trp400 contacts substrate.

The protein belongs to the glycosyl hydrolase 5 (cellulase A) family.

It is found in the secreted. It catalyses the reaction Random hydrolysis of (1-&gt;4)-beta-D-mannosidic linkages in mannans, galactomannans and glucomannans.. Endo-1,4-mannanase, a crucial enzyme for depolymerization of seed galactomannans and wood galactoglucomannans. The chain is Mannan endo-1,4-beta-mannosidase F (manF) from Aspergillus clavatus (strain ATCC 1007 / CBS 513.65 / DSM 816 / NCTC 3887 / NRRL 1 / QM 1276 / 107).